A 290-amino-acid polypeptide reads, in one-letter code: 4-hydroxy-tetrahydrodipicolinate synthase (290 aa).

Pyruvate is bound at residue T44. The active-site Proton donor/acceptor is Y132. K160 serves as the catalytic Schiff-base intermediate with substrate. I202 contributes to the pyruvate binding site.

This sequence belongs to the DapA family. In terms of assembly, homotetramer; dimer of dimers.

The protein resides in the cytoplasm. The enzyme catalyses L-aspartate 4-semialdehyde + pyruvate = (2S,4S)-4-hydroxy-2,3,4,5-tetrahydrodipicolinate + H2O + H(+). It functions in the pathway amino-acid biosynthesis; L-lysine biosynthesis via DAP pathway; (S)-tetrahydrodipicolinate from L-aspartate: step 3/4. Catalyzes the condensation of (S)-aspartate-beta-semialdehyde [(S)-ASA] and pyruvate to 4-hydroxy-tetrahydrodipicolinate (HTPA). The sequence is that of 4-hydroxy-tetrahydrodipicolinate synthase from Geotalea uraniireducens (strain Rf4) (Geobacter uraniireducens).